The chain runs to 133 residues: Glutaredoxin-C4, chloroplastic (133 aa).

Low complexity predominate over residues 1–13; the sequence is MGMAQSSSSSSRP. The disordered stretch occupies residues 1–25; that stretch reads MGMAQSSSSSSRPSDSEQLEEPSKP. The transit peptide at 1-27 directs the protein to the chloroplast; that stretch reads MGMAQSSSSSSRPSDSEQLEEPSKPVM. The Glutaredoxin domain maps to 29–129; sequence LDKAKEIVAS…PLLTEAGAIA (101 aa). A disulfide bridge connects residues C49 and C52.

It belongs to the glutaredoxin family. CPYC subfamily.

It localises to the plastid. It is found in the chloroplast. Has a glutathione-disulfide oxidoreductase activity in the presence of NADPH and glutathione reductase. Reduces low molecular weight disulfides and proteins. This is Glutaredoxin-C4, chloroplastic (GRXC4) from Oryza sativa subsp. japonica (Rice).